The chain runs to 267 residues: Indole-3-glycerol phosphate synthase (267 aa).

The protein belongs to the TrpC family.

It catalyses the reaction 1-(2-carboxyphenylamino)-1-deoxy-D-ribulose 5-phosphate + H(+) = (1S,2R)-1-C-(indol-3-yl)glycerol 3-phosphate + CO2 + H2O. It participates in amino-acid biosynthesis; L-tryptophan biosynthesis; L-tryptophan from chorismate: step 4/5. The protein is Indole-3-glycerol phosphate synthase of Verminephrobacter eiseniae (strain EF01-2).